The following is a 706-amino-acid chain: Kinesin-like protein KIP2 (706 aa).

Low complexity-rich tracts occupy residues 1 to 28 (MIQK…QSPS) and 36 to 63 (SNLT…RSNS). The segment at 1–139 (MIQKMSPSLR…QPRSNSHHGS (139 aa)) is disordered. The Kinesin motor domain occupies 102-493 (SITVTIRPKP…LRFASRAKNV (392 aa)). Residues 127–139 (RYSQPRSNSHHGS) show a composition bias toward polar residues. An ATP-binding site is contributed by 202 to 209 (GMTGSGKT). Residues 413-445 (VGSNIPSPSASGSSSSSGNATNNGTSPSNHIPY) form a disordered region. Residues 414–441 (GSNIPSPSASGSSSSSGNATNNGTSPSN) show a composition bias toward low complexity. 3 coiled-coil regions span residues 507–541 (NNDG…NIGE), 569–589 (MRAE…LLDK), and 612–689 (TLLE…RALK).

The protein belongs to the TRAFAC class myosin-kinesin ATPase superfamily. Kinesin family. In terms of assembly, might be dimeric.

Its subcellular location is the cytoplasm. The protein localises to the cytoskeleton. Its function is as follows. Required for assembly of the mitotic spindle. The protein is Kinesin-like protein KIP2 (KIP2) of Saccharomyces cerevisiae (strain ATCC 204508 / S288c) (Baker's yeast).